The primary structure comprises 667 residues: 1-deoxy-D-xylulose-5-phosphate synthase (667 aa).

Thiamine diphosphate-binding positions include H73 and 113-115 (SHA). D145 lines the Mg(2+) pocket. Thiamine diphosphate-binding positions include 146–147 (GA), N175, Y297, and E379. N175 is a binding site for Mg(2+).

Belongs to the transketolase family. DXPS subfamily. In terms of assembly, homodimer. Mg(2+) serves as cofactor. Thiamine diphosphate is required as a cofactor.

The catalysed reaction is D-glyceraldehyde 3-phosphate + pyruvate + H(+) = 1-deoxy-D-xylulose 5-phosphate + CO2. It participates in metabolic intermediate biosynthesis; 1-deoxy-D-xylulose 5-phosphate biosynthesis; 1-deoxy-D-xylulose 5-phosphate from D-glyceraldehyde 3-phosphate and pyruvate: step 1/1. Its function is as follows. Catalyzes the acyloin condensation reaction between C atoms 2 and 3 of pyruvate and glyceraldehyde 3-phosphate to yield 1-deoxy-D-xylulose-5-phosphate (DXP). This is 1-deoxy-D-xylulose-5-phosphate synthase from Kocuria rhizophila (strain ATCC 9341 / DSM 348 / NBRC 103217 / DC2201).